The sequence spans 1223 residues: RNA-binding protein 20 (1223 aa).

Disordered regions lie at residues 1 to 59 (MVLA…QAGL), 238 to 288 (QAYG…PTSQ), and 306 to 381 (GEVG…GARR). Residues 29-57 (APAPPAPPGPRGMQPPPPPPPPPPPPPQA) are compositionally biased toward pro residues. 2 stretches are compositionally biased toward polar residues: residues 238–261 (QAYGSETDSQPSFLPASASTSGSV) and 314–331 (GPNSQWESPHGFSGQSKP). The U1-type zinc finger occupies 410–444 (HLPHICSICDKKVFDLKDWELHVKGKLHAQKCLLF). Residues 520-595 (RVVHICNLPE…EKLLIRMSKR (76 aa)) enclose the RRM domain. Basic and acidic residues predominate over residues 626 to 636 (EADRYGPERPR). 3 disordered regions span residues 626-902 (EADR…TNME), 971-995 (EISLKSPKEPPSASTSCPSDMDVEM), and 1042-1102 (MSSP…STQE). The segment at 630–657 (YGPERPRSRSPVSRSLSPRSHTPSFTSC) is RS. Residues S637, S639, S642, S644, S662, and S681 each carry the phosphoserine modification. Low complexity predominate over residues 638–662 (RSPVSRSLSPRSHTPSFTSCSSSHS). Basic and acidic residues-rich tracts occupy residues 676–711 (DSWEHSPYARREEERGPAPWRENGEDKRDRTDMWAH) and 718–737 (RQVDKTELDERLEGGRGYRE). Low complexity predominate over residues 742-752 (SGSPSSLHSVS). Position 744 is a phosphoserine (S744). Basic and acidic residues-rich tracts occupy residues 755-774 (KSREDGYYRKEPKGKSDKYL) and 786-852 (RKDE…KEEQ). 8 positions are modified to phosphoserine: S803, S861, S872, S887, S889, S973, S976, and S1044. The segment covering 864–884 (RQEKETESSDAENTRTRKEQD) has biased composition (basic and acidic residues). Over residues 1083-1102 (STPTETDLQSQACQGVSTQE) the composition is skewed to polar residues. S1111 and S1116 each carry phosphoserine. The Matrin-type zinc finger occupies 1157–1188 (FYCKLCGLFYTSEEMAKMSHCRSAVHYRNLQK). The tract at residues 1197–1223 (GLKETEGAGSPRPEDSGIVPHFERKKL) is disordered. The residue at position 1206 (S1206) is a Phosphoserine.

In terms of assembly, associates with components of the U1 and U2 U1 small nuclear ribonucleoprotein complexes. In terms of processing, phosphorylation regulates the subcellular localization. Phosphorylation of Ser-637 and Ser-639 in the RS (arginine/serine-rich) region promotes nuclear localization of the protein. In contrast, phosphorylation of the C-terminal disordered region promotes localization to cytoplasmic ribonucleoprotein granules.

The protein resides in the nucleus. It localises to the cytoplasm. Its subcellular location is the cytoplasmic ribonucleoprotein granule. In terms of biological role, RNA-binding protein that acts as a regulator of mRNA splicing of a subset of genes encoding key structural proteins involved in cardiac development, such as TTN (Titin), CACNA1C, CAMK2D or PDLIM5/ENH. Acts as a repressor of mRNA splicing: specifically binds the 5'UCUU-3' motif that is predominantly found within intronic sequences of pre-mRNAs, leading to the exclusion of specific exons in target transcripts. RBM20-mediated exon skipping is hormone-dependent and is essential for TTN isoform transition in both cardiac and skeletal muscles. RBM20-mediated exon skipping of TTN provides substrates for the formation of circular RNA (circRNAs) from the TTN transcripts. Together with RBM24, promotes the expression of short isoforms of PDLIM5/ENH in cardiomyocytes. This Sus scrofa (Pig) protein is RNA-binding protein 20.